Consider the following 340-residue polypeptide: MAASSSEISEMKGVEESPEVPGEGPGHSEAETGPPQVLAGVPDQPEALQPGPDTTAALVDSGPKAELAPETTETPAGASETAQATDLSLSPGGESKANCSPEDLCQETVSKPEVSKETTADQGSRLESAAPPEPAPEPAPQPDPQPDSQPTPKPALQPELPTQEDPTPEILSESVGEKQENGAVVPLQAGDGEEGPAPEPHSPPSKKSPPANGAPPRVLQQLVEEDRMGRAHSGHPGSPRGSLSRHPSSQLAGPGVEGGEGTQKPRDYIILAILSCFCPMWPVNIVAFAYAVMSRNSLQQGDVDGAQRLGRVAKLLSIVALVGGVLIIIASCVINLGVYK.

The interval 1–261 (MAASSSEISE…AGPGVEGGEG (261 aa)) is disordered. The Cytoplasmic segment spans residues 1–268 (MAASSSEISE…GEGTQKPRDY (268 aa)). Phosphoserine is present on Ser-28. The residue at position 74 (Thr-74) is a Phosphothreonine. 2 stretches are compositionally biased toward pro residues: residues 131-155 (PPEP…PKPA) and 197-207 (APEPHSPPSKK). Ser-238 carries the post-translational modification Phosphoserine. The residue at position 240 (Arg-240) is an Omega-N-methylarginine. Phosphoserine occurs at positions 248 and 249. Residues 269-289 (IILAILSCFCPMWPVNIVAFA) constitute an intramembrane region (helical). The Cytoplasmic portion of the chain corresponds to 290-317 (YAVMSRNSLQQGDVDGAQRLGRVAKLLS). A helical membrane pass occupies residues 318–338 (IVALVGGVLIIIASCVINLGV). Over 339–340 (YK) the chain is Extracellular.

It belongs to the CD225/Dispanin family. Component of the outer core of AMPAR complex. AMPAR complex consists of an inner core made of 4 pore-forming GluA/GRIA proteins (GRIA1, GRIA2, GRIA3 and GRIA4) and 4 major auxiliary subunits arranged in a twofold symmetry. One of the two pairs of distinct binding sites is occupied either by CNIH2, CNIH3 or CACNG2, CACNG3. The other harbors CACNG2, CACNG3, CACNG4, CACNG8 or GSG1L. This inner core of AMPAR complex is complemented by outer core constituents binding directly to the GluA/GRIA proteins at sites distinct from the interaction sites of the inner core constituents. Outer core constituents include at least PRRT1, PRRT2, CKAMP44/SHISA9, FRRS1L and NRN1. The proteins of the inner and outer core serve as a platform for other, more peripherally associated AMPAR constituents. Alone or in combination, these auxiliary subunits control the gating and pharmacology of the AMPAR complex and profoundly impact their biogenesis and protein processing. Interacts with intersectin 1/ITSN1. Interacts with SNARE complex components, including SNAP25, STX1A, SYT1 and SYT2; this interaction may inhibit SNARE complex formation.

It localises to the cell membrane. The protein resides in the presynaptic cell membrane. Its subcellular location is the synapse. The protein localises to the cell projection. It is found in the axon. It localises to the cytoplasmic vesicle. The protein resides in the secretory vesicle. Its subcellular location is the synaptic vesicle membrane. The protein localises to the postsynaptic density membrane. It is found in the dendritic spine. In terms of biological role, as a component of the outer core of AMPAR complex, may be involved in synaptic transmission in the central nervous system. In hippocampal neurons, in presynaptic terminals, plays an important role in the final steps of neurotransmitter release, possibly by regulating Ca(2+)-sensing. In the cerebellum, may inhibit SNARE complex formation and down-regulate short-term facilitation. The protein is Proline-rich transmembrane protein 2 (PRRT2) of Pongo abelii (Sumatran orangutan).